The sequence spans 210 residues: Probable septum site-determining protein MinC (210 aa).

This sequence belongs to the MinC family. Interacts with MinD and FtsZ.

Functionally, cell division inhibitor that blocks the formation of polar Z ring septums. Rapidly oscillates between the poles of the cell to destabilize FtsZ filaments that have formed before they mature into polar Z rings. Prevents FtsZ polymerization. In Thermotoga sp. (strain RQ2), this protein is Probable septum site-determining protein MinC.